The following is an 867-amino-acid chain: Protein melted homolog (867 aa).

The segment at 480-505 (MPSSSRTNVHLSQAASSSRGHSLPQT) is disordered. A PH domain is found at 753–860 (EKVLEGQLKE…WLHCLQIAMA (108 aa)).

The protein belongs to the MELT/VEPH family.

The protein resides in the cell membrane. The polypeptide is Protein melted homolog (Caenorhabditis briggsae).